The following is an 833-amino-acid chain: DNA polymerase I, thermostable (833 aa).

The 5'-3' exonuclease domain maps to 173 to 267 (VPPERWVDFR…FKALRRRTPD (95 aa)). The interval 412–833 (ERLFQNLFPR…GRDWLEAKQD (422 aa)) is polymerase.

It belongs to the DNA polymerase type-A family.

The catalysed reaction is DNA(n) + a 2'-deoxyribonucleoside 5'-triphosphate = DNA(n+1) + diphosphate. Functionally, in addition to polymerase activity, this DNA polymerase exhibits 5'-3' exonuclease activity. Unlikely to have 3'-5' exonuclease activity due to absence of a 3'-5' exonuclease domain. The protein is DNA polymerase I, thermostable (polA) of Thermus filiformis.